A 211-amino-acid polypeptide reads, in one-letter code: Ethylene-responsive transcription factor LEP (211 aa).

2 disordered regions span residues 1 to 21 (MNTTSSKSKKKQDDQVGTRFL) and 74 to 110 (NFVYSDMPPSSSVTSIVSPDDPPPPPPPPAPPSNDPV). The segment at residues 19 to 76 (RFLGVRRRPWGRYAAEIRDPTTKERHWLGTFDTAEEAALAYDRAARSMRGTRARTNFV) is a DNA-binding region (AP2/ERF). Residues 81-92 (PPSSSVTSIVSP) show a composition bias toward low complexity. The span at 93–107 (DDPPPPPPPPAPPSN) shows a compositional bias: pro residues.

It belongs to the AP2/ERF transcription factor family. ERF subfamily. As to expression, expressed in germinating seeds. Present in young shoots, at low levels, especially in leaf primordia and developing leaf blades. Also detected in vascular tissue, mostly in xylem, of young leaves, petioles and hypocotyls.

It localises to the nucleus. Functionally, cell division-promoting factor involved in leaf blade differentiation, inflorescence branching, as well as in carpel and silique shape. Promotes the number of xylem cells. Positively regulates the gibberellin signaling pathway leading to germination, hypocotyl elongation, and leaf expansion. Probably acts as a transcriptional activator. Binds to the GCC-box pathogenesis-related promoter element. May be involved in the regulation of gene expression by stress factors and by components of stress signal transduction pathways. The polypeptide is Ethylene-responsive transcription factor LEP (LEP) (Arabidopsis thaliana (Mouse-ear cress)).